Consider the following 774-residue polypeptide: Acetyl-CoA decarbonylase/synthase complex subunit alpha (774 aa).

6 residues coordinate [4Fe-4S] cluster: Cys73, Cys76, Cys77, Cys79, Cys84, and Cys94. His117 provides a ligand contact to CO. The [Ni-4Fe-4S] cluster site is built by His251, Cys279, and Cys318. 2 4Fe-4S ferredoxin-type domains span residues 398–427 and 436–466; these read LNEV…VKEA and FKGF…VSMT. 8 residues coordinate [4Fe-4S] cluster: Cys408, Cys411, Cys414, Cys418, Cys446, Cys449, Cys452, and Cys456. [Ni-4Fe-4S] cluster-binding residues include Cys514, Cys543, and Cys578.

It belongs to the Ni-containing carbon monoxide dehydrogenase family. Heterotetramer of two alpha and two epsilon subunits. The ACDS complex is made up of alpha, epsilon, beta, gamma and delta subunits with a probable stoichiometry of (alpha(2)epsilon(2))(4)-beta(8)-(gamma(1)delta(1))(8). Requires [4Fe-4S] cluster as cofactor. [Ni-4Fe-4S] cluster is required as a cofactor.

The enzyme catalyses CO + 2 oxidized [2Fe-2S]-[ferredoxin] + H2O = 2 reduced [2Fe-2S]-[ferredoxin] + CO2 + 2 H(+). In terms of biological role, part of the ACDS complex that catalyzes the reversible cleavage of acetyl-CoA, allowing autotrophic growth from CO(2). The alpha-epsilon subcomponent functions as a carbon monoxide dehydrogenase. This is Acetyl-CoA decarbonylase/synthase complex subunit alpha from Methanocaldococcus jannaschii (strain ATCC 43067 / DSM 2661 / JAL-1 / JCM 10045 / NBRC 100440) (Methanococcus jannaschii).